A 409-amino-acid polypeptide reads, in one-letter code: uncharacterized protein (409 aa).

The next 12 membrane-spanning stretches (helical) occupy residues 3-23 (IIVKIPVWMLLSLFILSPTTE), 43-63 (ITQITSTLYFLGFAVGILSLG), 73-93 (PIVLLGLFIYIVSSIISIFSV), 95-115 (IEMLMIARFIQAFGVSVGSVI), 135-155 (ILSPWLLFIPSLGSYIGGYII), 162-182 (YVFVFFSLIGTILLALYYKIL), 209-229 (ILWLYAFIIGAFNGIYYGFFI), 248-268 (KLAFLLSFSAIFGGFLGGYLI), 283-303 (FIFSLCGCILFVVNAFILEFI), 309-329 (LAISMIFVPMMIHIIGHSLLI), 346-366 (TAGSIFGAIYYIVIAAVTYCV), and 379-399 (LLCLVSSISSVISFYYICILY).

The protein belongs to the major facilitator superfamily. Bcr/CmlA family.

The protein localises to the cell inner membrane. This is an uncharacterized protein from Rickettsia typhi (strain ATCC VR-144 / Wilmington).